We begin with the raw amino-acid sequence, 652 residues long: Acetyl-coenzyme A synthetase (652 aa).

Residues 189–192 (RGGK), T311, and N335 each bind CoA. ATP is bound by residues 387-389 (GEP), 411-416 (DTWWQT), D500, and R515. Residue S523 participates in CoA binding. Position 526 (R526) interacts with ATP. Residues V537, H539, and V542 each contribute to the Mg(2+) site. Residue R584 participates in CoA binding. At K609 the chain carries N6-acetyllysine.

The protein belongs to the ATP-dependent AMP-binding enzyme family. It depends on Mg(2+) as a cofactor. Acetylated. Deacetylation by the SIR2-homolog deacetylase activates the enzyme.

It carries out the reaction acetate + ATP + CoA = acetyl-CoA + AMP + diphosphate. In terms of biological role, catalyzes the conversion of acetate into acetyl-CoA (AcCoA), an essential intermediate at the junction of anabolic and catabolic pathways. AcsA undergoes a two-step reaction. In the first half reaction, AcsA combines acetate with ATP to form acetyl-adenylate (AcAMP) intermediate. In the second half reaction, it can then transfer the acetyl group from AcAMP to the sulfhydryl group of CoA, forming the product AcCoA. This chain is Acetyl-coenzyme A synthetase, found in Rhizobium rhizogenes (strain K84 / ATCC BAA-868) (Agrobacterium radiobacter).